The chain runs to 78 residues: MLVLTRKQNESIMIGDDIEITVVGTEGDKVRLGIKAPKDVEIHRAEVYQKIQEENVKASQVSENVLDKLSDALQKKNK.

Belongs to the CsrA/RsmA family. Homodimer; the beta-strands of each monomer intercalate to form a hydrophobic core, while the alpha-helices form wings that extend away from the core.

Its subcellular location is the cytoplasm. A translational regulator that binds mRNA to regulate translation initiation and/or mRNA stability. Usually binds in the 5'-UTR at or near the Shine-Dalgarno sequence preventing ribosome-binding, thus repressing translation. Its main target seems to be the major flagellin gene, while its function is anatagonized by FliW. The chain is Translational regulator CsrA from Natranaerobius thermophilus (strain ATCC BAA-1301 / DSM 18059 / JW/NM-WN-LF).